The primary structure comprises 308 residues: 34.2 kDa protein in rubredoxin operon (308 aa).

A disulfide bond links Cys-136 and Cys-139. Residue 268–278 (TNIKGVFAAGD) participates in FAD binding.

Belongs to the class-II pyridine nucleotide-disulfide oxidoreductase family.

The sequence is that of 34.2 kDa protein in rubredoxin operon from Clostridium pasteurianum.